We begin with the raw amino-acid sequence, 59 residues long: Cecropin-B1 (59 aa).

The first 23 residues, 1-23 (MNFNKLFLIVILAALLLLGQTEA), serve as a signal peptide directing secretion. L57 is modified (leucine amide).

The protein belongs to the cecropin family.

Its subcellular location is the secreted. Its function is as follows. Cecropins have lytic and antibacterial activity against several Gram-positive and Gram-negative bacteria. The sequence is that of Cecropin-B1 (CECB1) from Culex pipiens pipiens (Northern house mosquito).